The primary structure comprises 80 residues: Raniseptin-8 (80 aa).

The signal sequence occupies residues 1–22 (MAFLKKSLFLVLFLGIVSLSIC). Residues 23–49 (EEEKREGEEEEKQEEENEELSEEELRE) constitute a propeptide that is removed on maturation. The tract at residues 27–46 (REGEEEEKQEEENEELSEEE) is disordered. Residues 30–44 (EEEEKQEEENEELSE) show a composition bias toward acidic residues.

Belongs to the frog skin active peptide (FSAP) family. Dermaseptin subfamily. As to expression, expressed by the skin glands.

It is found in the secreted. Functionally, has antibacterial activity. This Boana raniceps (Chaco tree frog) protein is Raniseptin-8.